Here is a 490-residue protein sequence, read N- to C-terminus: Cytochrome P450 71A19 (490 aa).

A helical transmembrane segment spans residues 3 to 23 (IILVTLCLTTLLALLLLKSIL). Residue Cys433 coordinates heme.

Belongs to the cytochrome P450 family. Heme serves as cofactor.

It localises to the membrane. This Arabidopsis thaliana (Mouse-ear cress) protein is Cytochrome P450 71A19 (CYP71A19).